Consider the following 430-residue polypeptide: Drebrin-like protein (430 aa).

Positions 4–133 constitute an ADF-H domain; it reads NLSRNGPALQ…EPECIMEKVA (130 aa). Residue threonine 26 is modified to Phosphothreonine. Glycine 137 and serine 160 each carry phosphoserine. At lysine 176 the chain carries N6-acetyllysine. Residues 176–231 adopt a coiled-coil conformation; it reads KDSFWAKAEKEEENRRLEEKRRAEEAQRQLEQERRERELREAARREQRYQEQGGEA. 2 positions are modified to phosphoserine: alanine 183 and serine 232. Residues 219-283 form a disordered region; that stretch reads RREQRYQEQG…SSPQPGKLRS (65 aa). Polar residues predominate over residues 233–244; it reads PQRTWEQQQEVV. Basic and acidic residues predominate over residues 245-267; the sequence is SRNRNEQESAVHPREIFKQKERA. Positions 268 to 277 are enriched in polar residues; sequence MSTTSISSPQ. A phosphoserine mark is found at serine 269, serine 272, serine 275, and serine 283. Lysine 288 bears the N6-acetyllysine mark. At threonine 291 the chain carries Phosphothreonine. Phosphotyrosine is present on residues tyrosine 334 and tyrosine 344. An SH3 domain is found at 371 to 430; the sequence is GQGLCARALYDYQAADDTEISFDPENLITGIEVIDEGWWRGYGPDGHFGMFPANYVELIE.

The protein belongs to the ABP1 family. In terms of assembly, interacts with SHANK2, SHANK3 and SYN1. Interacts with FGD1 and DNM1. Interacts with ANKRD54. Interacts with COBL. Interacts with WASL and WIPF1. Interacts with MAP4K1 and PRAM1. In terms of processing, degraded by caspases during apoptosis.

It localises to the cytoplasm. Its subcellular location is the cytoskeleton. It is found in the cell projection. The protein resides in the lamellipodium. The protein localises to the ruffle. It localises to the cell cortex. Its subcellular location is the cytosol. It is found in the synapse. The protein resides in the perikaryon. The protein localises to the neuron projection. It localises to the cell membrane. Its subcellular location is the cytoplasmic vesicle. It is found in the clathrin-coated vesicle membrane. The protein resides in the golgi apparatus membrane. The protein localises to the podosome. It localises to the early endosome. Its subcellular location is the dendrite. It is found in the postsynaptic density. Functionally, adapter protein that binds F-actin and DNM1, and thereby plays a role in receptor-mediated endocytosis. Plays a role in the reorganization of the actin cytoskeleton, formation of cell projections, such as neurites, in neuron morphogenesis and synapse formation via its interaction with WASL and COBL. Does not bind G-actin and promote actin polymerization by itself. Required for the formation of organized podosome rosettes. May act as a common effector of antigen receptor-signaling pathways in leukocytes. Acts as a key component of the immunological synapse that regulates T-cell activation by bridging TCRs and the actin cytoskeleton to gene activation and endocytic processes. This is Drebrin-like protein (DBNL) from Homo sapiens (Human).